A 715-amino-acid chain; its full sequence is Putative membrane protein IgaA homolog (715 aa).

Transmembrane regions (helical) follow at residues 2–22, 214–234, 235–255, 349–369, and 663–683; these read STIV…GLLW, EACA…GPTV, TLPW…WYLF, NLTL…YVPL, and ATSL…VLLI.

The protein belongs to the IgaA family.

The protein localises to the cell inner membrane. The chain is Putative membrane protein IgaA homolog from Yersinia pestis.